A 504-amino-acid polypeptide reads, in one-letter code: L-carnitine/gamma-butyrobetaine antiporter (504 aa).

12 helical membrane-spanning segments follow: residues 8 to 28 (AGIE…LCWL), 51 to 71 (WGWA…WLVF), 92 to 112 (IFMM…SIEI), 143 to 163 (GPLP…FFFV), 195 to 215 (FYLV…TPLV), 231 to 251 (LDAI…AFGL), 263 to 283 (TYLS…SFIV), 315 to 335 (AWTV…SIFL), 347 to 367 (LCLG…TYSG), 403 to 423 (LSTA…VTLI), 446 to 466 (LLVR…LLAL), and 475 to 495 (AIIA…LSFI).

This sequence belongs to the BCCT transporter (TC 2.A.15) family. CaiT subfamily. Homotrimer.

It localises to the cell inner membrane. The enzyme catalyses 4-(trimethylamino)butanoate(in) + (R)-carnitine(out) = 4-(trimethylamino)butanoate(out) + (R)-carnitine(in). Its pathway is amine and polyamine metabolism; carnitine metabolism. Catalyzes the exchange of L-carnitine for gamma-butyrobetaine. The protein is L-carnitine/gamma-butyrobetaine antiporter of Proteus sp. (strain LE138).